Here is a 96-residue protein sequence, read N- to C-terminus: UPF0235 protein Shewmr4_1190 (96 aa).

The protein belongs to the UPF0235 family.

The polypeptide is UPF0235 protein Shewmr4_1190 (Shewanella sp. (strain MR-4)).